Here is a 505-residue protein sequence, read N- to C-terminus: GDP-Man:Man(3)GlcNAc(2)-PP-Dol alpha-1,2-mannosyltransferase (505 aa).

The Lumenal portion of the chain corresponds to 1–4 (MSTM). Residues 5 to 25 (LWVVVAAVLLFVLPVVRVPML) traverse the membrane as a helical segment. Over 26 to 130 (DLTRRNIIRW…KWVDGSTWKH (105 aa)) the chain is Cytoplasmic. Positions 131 to 151 (LTLVGQAMGSMLLTIEALLRF) form an intramembrane region, helical. Residues 152-374 (VPDIWLDTMG…FGINAMWNEH (223 aa)) lie on the Cytoplasmic side of the membrane. An intramembrane region (helical) is located at residues 375–395 (FGIAVVEYAAAGLISLVHASA). The Cytoplasmic segment spans residues 396–505 (GPLLDIIVPW…EHKTSRLGSN (110 aa)).

The protein belongs to the glycosyltransferase group 1 family.

The protein localises to the endoplasmic reticulum membrane. The catalysed reaction is an alpha-D-Man-(1-&gt;3)-[alpha-D-Man-(1-&gt;6)]-beta-D-Man-(1-&gt;4)-beta-D-GlcNAc-(1-&gt;4)-alpha-D-GlcNAc-diphospho-di-trans,poly-cis-dolichol + 2 GDP-alpha-D-mannose = an alpha-D-Man-(1-&gt;2)-alpha-D-Man-(1-&gt;2)-alpha-D-Man-(1-&gt;3)-[alpha-D-Man-(1-&gt;6)]-beta-D-Man-(1-&gt;4)-beta-D-GlcNAc-(1-&gt;4)-alpha-D-GlcNAc-diphospho-di-trans,poly-cis-dolichol + 2 GDP + 2 H(+). Its pathway is protein modification; protein glycosylation. Its function is as follows. GDP-Man:Man(3)GlcNAc(2)-PP-Dol alpha-1,2-mannosyltransferase that operates in the biosynthetic pathway of dolichol-linked oligosaccharides, the glycan precursors employed in protein asparagine (N)-glycosylation. The assembly of dolichol-linked oligosaccharides begins on the cytosolic side of the endoplasmic reticulum membrane and finishes in its lumen. The sequential addition of sugars to dolichol pyrophosphate produces dolichol-linked oligosaccharides containing fourteen sugars, including two GlcNAcs, nine mannoses and three glucoses. Once assembled, the oligosaccharide is transferred from the lipid to nascent proteins by oligosaccharyltransferases. Catalyzes, on the cytoplasmic face of the endoplasmic reticulum, the addition of the fourth and fifth mannose residues to the dolichol-linked oligosaccharide chain, to produce Man(5)GlcNAc(2)-PP-dolichol core oligosaccharide. This is GDP-Man:Man(3)GlcNAc(2)-PP-Dol alpha-1,2-mannosyltransferase (ALG11) from Candida glabrata (strain ATCC 2001 / BCRC 20586 / JCM 3761 / NBRC 0622 / NRRL Y-65 / CBS 138) (Yeast).